The primary structure comprises 462 residues: Acetyl-CoA decarbonylase/synthase complex subunit gamma (462 aa).

Positions 1-60 (MAQLSAMDVYNLLPKANCGACGCKTCMEFATKLVNREAKPEDCPKLDDESLEKLQELLAP) constitute a 4Fe-4S domain. Residues Cys18, Cys21, Cys26, and Cys43 each coordinate [4Fe-4S] cluster.

As to quaternary structure, heterodimer of delta and gamma chains. The ACDS complex is made up of alpha, epsilon, beta, gamma and delta chains with a probable stoichiometry of (alpha(2)epsilon(2))(4)-beta(8)-(gamma(1)delta(1))(8). Requires corrinoid as cofactor. The cofactor is [4Fe-4S] cluster.

The catalysed reaction is 5,6,7,8-tetrahydrosarcinapterin + methyl-Co(III)-[corrinoid Fe-S protein] = 5-methyltetrahydrosarcinapterin + Co(I)-[corrinoid Fe-S protein] + H(+). Its function is as follows. Part of a complex that catalyzes the reversible cleavage of acetyl-CoA, allowing autotrophic growth from CO(2). The polypeptide is Acetyl-CoA decarbonylase/synthase complex subunit gamma (Methanopyrus kandleri (strain AV19 / DSM 6324 / JCM 9639 / NBRC 100938)).